The sequence spans 412 residues: Inositol polyphosphate-5-phosphatase A (412 aa).

Cys-409 carries the S-farnesyl cysteine lipid modification. A propeptide spans 410–412 (VVQ) (removed in mature form).

Belongs to the inositol 1,4,5-trisphosphate 5-phosphatase type I family. As to quaternary structure, interacts with TASOR. In terms of processing, isoprenylation at Cys-409 is required for localization at the membrane.

It is found in the cell membrane. It localises to the cell projection. The protein resides in the dendrite. It carries out the reaction 1D-myo-inositol 1,4,5-trisphosphate + H2O = 1D-myo-inositol 1,4-bisphosphate + phosphate. The catalysed reaction is 1D-myo-inositol 1,3,4,5-tetrakisphosphate + H2O = 1D-myo-inositol 1,3,4-trisphosphate + phosphate. Its activity is regulated as follows. Inhibited by EDTA and 2,3-bisphosphoglycerate. In terms of biological role, phosphatase that specifically hydrolyzes the 5-phosphate of inositol 1,4,5-trisphosphate to inositol 1,4-bisphosphate, and inositol 1,3,4,5-tetrasphosphate to inositol 1,3,4-trisphosphate. Plays a crucial role in the survival of cerebellar Purkinje cells. This chain is Inositol polyphosphate-5-phosphatase A (INPP5A), found in Canis lupus familiaris (Dog).